Here is a 92-residue protein sequence, read N- to C-terminus: MGRSLKKGPFVAASLLRKIDKLNDKGDKQVVKTWSRASTILPQMVGHTIAVHNGRQHVPVFVSEQMVGHKLGEFAPTRTFRSHSKSDKKARK.

It belongs to the universal ribosomal protein uS19 family.

Its function is as follows. Protein S19 forms a complex with S13 that binds strongly to the 16S ribosomal RNA. The polypeptide is Small ribosomal subunit protein uS19 (rpsS) (Synechocystis sp. (strain ATCC 27184 / PCC 6803 / Kazusa)).